We begin with the raw amino-acid sequence, 245 residues long: Orotidine 5'-phosphate decarboxylase (245 aa).

Substrate is bound by residues aspartate 22, lysine 44, 71–80, threonine 131, arginine 192, glutamine 201, glycine 221, and arginine 222; that span reads DLKFHDIPNT. Lysine 73 (proton donor) is an active-site residue.

This sequence belongs to the OMP decarboxylase family. Type 1 subfamily. Homodimer.

It carries out the reaction orotidine 5'-phosphate + H(+) = UMP + CO2. It functions in the pathway pyrimidine metabolism; UMP biosynthesis via de novo pathway; UMP from orotate: step 2/2. Its function is as follows. Catalyzes the decarboxylation of orotidine 5'-monophosphate (OMP) to uridine 5'-monophosphate (UMP). The sequence is that of Orotidine 5'-phosphate decarboxylase from Escherichia coli O81 (strain ED1a).